The primary structure comprises 439 residues: MKETPLSNCERRFLLRAIEEKKRLDGRQTYDYRNIRISFGTDYGCCIVELGKTRVLGQVSCELVSPKLNRATEGILFFNLELSQMAAPAFEPGRQSDLLVKLNRLMERCLRNSKCIDTESLCVVAGEKVWQIRVDLHLLNHDGNIIDAASIAAIVALCHFRRPDVSVQGDEVTLYTPEERDPVPLSIHHMPICVSFAFFQQGTYLLVDPNEREERVMDGLLVIAMNKHREICTIQSSGGIMLLKDQVLRCSKIAGVKVAEITELILKALENDQKVRKEGGKFGFAESIANQRITAFKMEKAPIDTSDVEEKAEEIIAEAEPPSEVVSTPVLWTPGTAQIGEGVENSWGDLEDSEKEDDEGGGDQAIILDGIKMDTGVEVSDIGSQDAPIILSDSEEEEMIILEPDKNPKKIRTQTTSAKQEKAPSKKPVKRRKKKRAAN.

Residues 1-268 form an ARE binding region; sequence MKETPLSNCE…AEITELILKA (268 aa). Ser65 carries the phosphoserine modification. Lys297 carries the N6-acetyllysine; alternate modification. Residue Lys297 forms a Glycyl lysine isopeptide (Lys-Gly) (interchain with G-Cter in SUMO1); alternate linkage. Residue Lys297 forms a Glycyl lysine isopeptide (Lys-Gly) (interchain with G-Cter in SUMO2); alternate linkage. Phosphoserine is present on residues Ser306, Val325, Ser327, and Ser346. 2 disordered regions span residues 335 to 363 and 391 to 439; these read GTAQ…GGGD and LSDS…RAAN. The segment covering 349-361 has biased composition (acidic residues); that stretch reads DLEDSEKEDDEGG. Phosphoserine occurs at positions 392, 394, 409, and 411. Lys419 participates in a covalent cross-link: Glycyl lysine isopeptide (Lys-Gly) (interchain with G-Cter in SUMO2). The span at 425–439 shows a compositional bias: basic residues; that stretch reads SKKPVKRRKKKRAAN.

The protein belongs to the RNase PH family. As to quaternary structure, component of the RNA exosome core complex (Exo-9), composed of EXOSC1, EXOSC2, EXOSC3, EXOSC4, EXOSC5, EXOSC6, EXOSC7, EXOSC8 and EXOSC9; within the complex interacts with EXOSC3, EXOSC4, EXOSC5 and DIS3. The catalytically inactive RNA exosome core complex (Exo-9) associates with the catalytic subunit EXOSC10/RRP6. Exo-9 may associate with DIS3 to form the nucleolar exosome complex, or DIS3L to form the cytoplasmic exosome complex. Exo-9 is formed by a hexameric base ring consisting of the heterodimers EXOSC4-EXOSC9, EXOSC5-EXOSC8 and EXOSC6-EXOSC7, and a cap ring consisting of EXOSC1, EXOSC2 and EXOSC3. The RNA exosome complex associates with cofactors C1D/RRP47, MPHOSPH6/MPP6 and MTREX/MTR4. Interacts (via C-terminus region) with SETX (via N-terminus domain); the interaction enhances SETX sumoylation. Interacts with DIS3; the interaction is direct.

Its subcellular location is the cytoplasm. The protein localises to the nucleus. It is found in the nucleolus. It localises to the nucleoplasm. Its function is as follows. Non-catalytic component of the RNA exosome complex which has 3'-&gt;5' exoribonuclease activity and participates in a multitude of cellular RNA processing and degradation events. In the nucleus, the RNA exosome complex is involved in proper maturation of stable RNA species such as rRNA, snRNA and snoRNA, in the elimination of RNA processing by-products and non-coding 'pervasive' transcripts, such as antisense RNA species and promoter-upstream transcripts (PROMPTs), and of mRNAs with processing defects, thereby limiting or excluding their export to the cytoplasm. The RNA exosome may be involved in Ig class switch recombination (CSR) and/or Ig variable region somatic hypermutation (SHM) by targeting AICDA deamination activity to transcribed dsDNA substrates. In the cytoplasm, the RNA exosome complex is involved in general mRNA turnover and specifically degrades inherently unstable mRNAs containing AU-rich elements (AREs) within their 3' untranslated regions, and in RNA surveillance pathways, preventing translation of aberrant mRNAs. It seems to be involved in degradation of histone mRNA. The catalytic inactive RNA exosome core complex of 9 subunits (Exo-9) is proposed to play a pivotal role in the binding and presentation of RNA for ribonucleolysis, and to serve as a scaffold for the association with catalytic subunits and accessory proteins or complexes. EXOSC9 binds to ARE-containing RNAs. This Homo sapiens (Human) protein is Exosome complex component RRP45 (EXOSC9).